Reading from the N-terminus, the 363-residue chain is Aminomethyltransferase (363 aa).

Belongs to the GcvT family. In terms of assembly, the glycine cleavage system is composed of four proteins: P, T, L and H.

It carries out the reaction N(6)-[(R)-S(8)-aminomethyldihydrolipoyl]-L-lysyl-[protein] + (6S)-5,6,7,8-tetrahydrofolate = N(6)-[(R)-dihydrolipoyl]-L-lysyl-[protein] + (6R)-5,10-methylene-5,6,7,8-tetrahydrofolate + NH4(+). In terms of biological role, the glycine cleavage system catalyzes the degradation of glycine. The polypeptide is Aminomethyltransferase (Staphylococcus saprophyticus subsp. saprophyticus (strain ATCC 15305 / DSM 20229 / NCIMB 8711 / NCTC 7292 / S-41)).